Here is a 123-residue protein sequence, read N- to C-terminus: uncharacterized protein (123 aa).

The signal sequence occupies residues 1 to 24; that stretch reads MLPLCLTFLSFFLSLGGSFKAVMT. The next 2 helical transmembrane spans lie at 39 to 59 and 101 to 121; these read FWIFNWTVTLIPLNSLVALAI and FGGILTIDLSFYWALGVALTG.

It localises to the membrane. This is an uncharacterized protein from Saccharomyces cerevisiae (strain ATCC 204508 / S288c) (Baker's yeast).